A 222-amino-acid polypeptide reads, in one-letter code: Leucyl/phenylalanyl-tRNA--protein transferase (222 aa).

It belongs to the L/F-transferase family.

It localises to the cytoplasm. The enzyme catalyses N-terminal L-lysyl-[protein] + L-leucyl-tRNA(Leu) = N-terminal L-leucyl-L-lysyl-[protein] + tRNA(Leu) + H(+). It carries out the reaction N-terminal L-arginyl-[protein] + L-leucyl-tRNA(Leu) = N-terminal L-leucyl-L-arginyl-[protein] + tRNA(Leu) + H(+). The catalysed reaction is L-phenylalanyl-tRNA(Phe) + an N-terminal L-alpha-aminoacyl-[protein] = an N-terminal L-phenylalanyl-L-alpha-aminoacyl-[protein] + tRNA(Phe). In terms of biological role, functions in the N-end rule pathway of protein degradation where it conjugates Leu, Phe and, less efficiently, Met from aminoacyl-tRNAs to the N-termini of proteins containing an N-terminal arginine or lysine. The protein is Leucyl/phenylalanyl-tRNA--protein transferase of Legionella pneumophila (strain Lens).